The primary structure comprises 734 residues: Alpha-catulin (734 aa).

A phosphoserine mark is found at S374 and S538.

Belongs to the vinculin/alpha-catenin family. Interacts with ARHGEF1. Interacts with DTNA. The interaction is required for correct localization of both CTNL1 and DTNA. Widely expressed. Expressed at lower level in neural tissues and at the highest level in the adrenal gland.

Its subcellular location is the cytoplasm. It is found in the cytoskeleton. The protein resides in the cell membrane. Functionally, may modulate the Rho pathway signaling by providing a scaffold for the Lbc Rho guanine nucleotide exchange factor (ARHGEF1). The protein is Alpha-catulin (CTNNAL1) of Homo sapiens (Human).